A 180-amino-acid chain; its full sequence is MKEKIPFYNEKEFHYMMKKTKKGTFSGWYIINPENNSVEFSGSFNRQFKLNKPVIPVNTEYVTRKEFNEYKDSNDQRLTKIENKVDKLEIKVDKLEKKVDKLEVKVDKLVETVNAQGEDLNNFKVEVRGTLQSQGETLQLILQTLQGMSKRLDSVEGRLDSMDGRLDSMETRLDKIDPLK.

Belongs to the UPF0134 family.

The protein is UPF0134 protein MPN_368 of Mycoplasma pneumoniae (strain ATCC 29342 / M129 / Subtype 1) (Mycoplasmoides pneumoniae).